Reading from the N-terminus, the 379-residue chain is MKLYEFEAKEIAKNNGIPVPRGGIAKTPEEARIVAEKIGGEVVLKAQVLVGRRGLAGGVLFASNSLEAEKVARELFSKRVRGEKVELILVEEKICIDKEYYLSLTIDRSNREIVYLVSPLGGVEIEELVKKYPDKLLRIRVDPVIGYKPYMSRLAAKFLGLPKELWPSMHKIMNSMYNIMKNYDADLVEFNPLVKTCSNEIVAVDAKITIDDNSLYRHIEFAEKYGRELSEMEAIAKKLGFSYVELDGDIGIMCNGAGLTMATMDMVAYYGGRPANFLDIGGGASRERVREAAKLLLKHDKVKVLLVNIFGGITRCNEVARGIIEAVEETGVKKPIVIRLLGTNEEIGRRLLEEKGYSVFSEADDAVKKAVEIAKNLSR.

In terms of domain architecture, ATP-grasp spans 9–235; sequence KEIAKNNGIP…GRELSEMEAI (227 aa). ATP contacts are provided by K45, E91, I94, and E99. N191 and D205 together coordinate Mg(2+). Substrate-binding positions include N255 and 312–314; that span reads GIT.

Belongs to the succinate/malate CoA ligase beta subunit family. In terms of assembly, heterotetramer of two alpha and two beta subunits. Mg(2+) is required as a cofactor.

It catalyses the reaction succinate + ATP + CoA = succinyl-CoA + ADP + phosphate. The enzyme catalyses GTP + succinate + CoA = succinyl-CoA + GDP + phosphate. The protein operates within carbohydrate metabolism; tricarboxylic acid cycle; succinate from succinyl-CoA (ligase route): step 1/1. Functionally, succinyl-CoA synthetase functions in the citric acid cycle (TCA), coupling the hydrolysis of succinyl-CoA to the synthesis of either ATP or GTP and thus represents the only step of substrate-level phosphorylation in the TCA. The beta subunit provides nucleotide specificity of the enzyme and binds the substrate succinate, while the binding sites for coenzyme A and phosphate are found in the alpha subunit. The sequence is that of Succinate--CoA ligase [ADP-forming] subunit beta from Staphylothermus marinus (strain ATCC 43588 / DSM 3639 / JCM 9404 / F1).